Reading from the N-terminus, the 309-residue chain is DNA replication terminus site-binding protein (309 aa).

This sequence belongs to the Tus family.

The protein resides in the cytoplasm. In terms of biological role, trans-acting protein required for termination of DNA replication. Binds to DNA replication terminator sequences (terA to terF) to prevent the passage of replication forks. The termination efficiency will be affected by the affinity of this protein for the terminator sequence. The polypeptide is DNA replication terminus site-binding protein (Yersinia enterocolitica serotype O:8 / biotype 1B (strain NCTC 13174 / 8081)).